Here is a 355-residue protein sequence, read N- to C-terminus: Histidinol-phosphate aminotransferase (355 aa).

An N6-(pyridoxal phosphate)lysine modification is found at lysine 218.

Belongs to the class-II pyridoxal-phosphate-dependent aminotransferase family. Histidinol-phosphate aminotransferase subfamily. Homodimer. Requires pyridoxal 5'-phosphate as cofactor.

It catalyses the reaction L-histidinol phosphate + 2-oxoglutarate = 3-(imidazol-4-yl)-2-oxopropyl phosphate + L-glutamate. It participates in amino-acid biosynthesis; L-histidine biosynthesis; L-histidine from 5-phospho-alpha-D-ribose 1-diphosphate: step 7/9. The polypeptide is Histidinol-phosphate aminotransferase (Chlorobaculum parvum (strain DSM 263 / NCIMB 8327) (Chlorobium vibrioforme subsp. thiosulfatophilum)).